Consider the following 306-residue polypeptide: Ribonuclease Z (306 aa).

Positions 63, 65, 67, 68, 140, 211, and 269 each coordinate Zn(2+). Asp67 (proton acceptor) is an active-site residue.

The protein belongs to the RNase Z family. As to quaternary structure, homodimer. Zn(2+) is required as a cofactor.

The catalysed reaction is Endonucleolytic cleavage of RNA, removing extra 3' nucleotides from tRNA precursor, generating 3' termini of tRNAs. A 3'-hydroxy group is left at the tRNA terminus and a 5'-phosphoryl group is left at the trailer molecule.. Functionally, zinc phosphodiesterase, which displays some tRNA 3'-processing endonuclease activity. Probably involved in tRNA maturation, by removing a 3'-trailer from precursor tRNA. The protein is Ribonuclease Z of Listeria welshimeri serovar 6b (strain ATCC 35897 / DSM 20650 / CCUG 15529 / CIP 8149 / NCTC 11857 / SLCC 5334 / V8).